Reading from the N-terminus, the 407-residue chain is Sensor histidine kinase YdfH (407 aa).

The Cytoplasmic portion of the chain corresponds to 1–25; that stretch reads MLIRNPFKDKYYSHDRRALNMLALR. The next 2 helical transmembrane spans lie at 26-46 and 47-67; these read VPGLAFILMIYIASIVLQFVS and GGWSILLLYAFTILIAIFALL. Residues 68-78 are Cytoplasmic-facing; the sequence is HWHSYRWVKKR. 2 consecutive transmembrane segments (helical) span residues 79–99 and 100–120; these read VILYFAVQGLITFALANLMTG and FFILVIIGLYAFLIGQIIGMA. Topologically, residues 121–125 are cytoplasmic; it reads DRRRT. A helical transmembrane segment spans residues 126–146; that stretch reads FLILYLLLLLVINSAYHLHKG. The Extracellular segment spans residues 147–150; it reads EVLH. Residues 151–171 form a helical membrane-spanning segment; it reads FIVIAAPIMIVIITYAATFFA. The Cytoplasmic portion of the chain corresponds to 172-407; the sequence is QVDEKIKAQL…VPIQGEMQDE (236 aa). In terms of domain architecture, Histidine kinase spans 201 to 402; sequence ERQRMARDLH…QIEITVPIQG (202 aa). His210 is modified (phosphohistidine; by autocatalysis).

The protein localises to the cell membrane. It catalyses the reaction ATP + protein L-histidine = ADP + protein N-phospho-L-histidine.. In terms of biological role, member of the two-component regulatory system YdfH/YdfI. May activate YdfI by phosphorylation. This is Sensor histidine kinase YdfH (ydfH) from Bacillus subtilis (strain 168).